Reading from the N-terminus, the 151-residue chain is Transcriptional regulator MraZ (151 aa).

2 SpoVT-AbrB domains span residues 5 to 52 and 81 to 124; these read ANAI…PLDE and AVDL…DEDA.

The protein belongs to the MraZ family. Forms oligomers.

It is found in the cytoplasm. It localises to the nucleoid. This Pseudomonas fluorescens (strain SBW25) protein is Transcriptional regulator MraZ.